The following is a 642-amino-acid chain: Threonine--tRNA ligase (642 aa).

In terms of domain architecture, TGS spans 1–63; that stretch reads MNDITVTLPD…YNDARVVIVT (63 aa). Residues 242 to 533 are catalytic; the sequence is DHRKIGQELD…LIEHFNGKFP (292 aa). Zn(2+)-binding residues include Cys-334, His-385, and His-510.

The protein belongs to the class-II aminoacyl-tRNA synthetase family. Homodimer. The cofactor is Zn(2+).

The protein resides in the cytoplasm. The enzyme catalyses tRNA(Thr) + L-threonine + ATP = L-threonyl-tRNA(Thr) + AMP + diphosphate + H(+). Functionally, catalyzes the attachment of threonine to tRNA(Thr) in a two-step reaction: L-threonine is first activated by ATP to form Thr-AMP and then transferred to the acceptor end of tRNA(Thr). This chain is Threonine--tRNA ligase, found in Haloquadratum walsbyi (strain DSM 16790 / HBSQ001).